Here is a 304-residue protein sequence, read N- to C-terminus: ATP phosphoribosyltransferase (304 aa).

This sequence belongs to the ATP phosphoribosyltransferase family.

Its subcellular location is the cytoplasm. The catalysed reaction is 1-(5-phospho-beta-D-ribosyl)-ATP + diphosphate = 5-phospho-alpha-D-ribose 1-diphosphate + ATP. The protein operates within amino-acid biosynthesis; L-histidine biosynthesis; L-histidine from 5-phospho-alpha-D-ribose 1-diphosphate: step 1/9. In terms of biological role, catalyzes the condensation of ATP and 5-phosphoribose 1-diphosphate to form N'-(5'-phosphoribosyl)-ATP (PR-ATP). Has a crucial role in the pathway because the rate of histidine biosynthesis seems to be controlled primarily by regulation of the enzymatic activity. This chain is ATP phosphoribosyltransferase (HIS1), found in Debaryomyces hansenii (strain ATCC 36239 / CBS 767 / BCRC 21394 / JCM 1990 / NBRC 0083 / IGC 2968) (Yeast).